The chain runs to 476 residues: Undecaprenyl-phosphate galactose phosphotransferase (476 aa).

A run of 5 helical transmembrane segments spans residues 15–35, 52–72, 93–113, 115–135, and 283–303; these read IFLA…SLGC, LDTR…WFWI, TIVI…WQFS, YVWV…RALT, and FDIV…IYLW. The Cytoplasmic segment spans residues 304-476; sequence YKVTRDGGPA…KVVLRRDGAY (173 aa).

This sequence belongs to the bacterial sugar transferase family.

It localises to the cell inner membrane. It carries out the reaction di-trans,octa-cis-undecaprenyl phosphate + UDP-alpha-D-galactose = alpha-D-galactosyl-di-trans,octa-cis-undecaprenyl diphosphate + UMP. It functions in the pathway bacterial outer membrane biogenesis; LPS O-antigen biosynthesis. Functionally, is responsible for transferring galactose-1-phosphate to the lipid precursor undecaprenol phosphate in the first steps of O-polysaccharide biosynthesis. The polypeptide is Undecaprenyl-phosphate galactose phosphotransferase (rfbP) (Salmonella typhimurium (strain LT2 / SGSC1412 / ATCC 700720)).